We begin with the raw amino-acid sequence, 1188 residues long: DNA-directed RNA polymerase subunit beta (1188 aa).

The protein belongs to the RNA polymerase beta chain family. The RNAP catalytic core consists of 2 alpha, 1 beta, 1 beta' and 1 omega subunit. When a sigma factor is associated with the core the holoenzyme is formed, which can initiate transcription.

It carries out the reaction RNA(n) + a ribonucleoside 5'-triphosphate = RNA(n+1) + diphosphate. DNA-dependent RNA polymerase catalyzes the transcription of DNA into RNA using the four ribonucleoside triphosphates as substrates. In Streptococcus sanguinis (strain SK36), this protein is DNA-directed RNA polymerase subunit beta.